A 640-amino-acid polypeptide reads, in one-letter code: MGKKKTRGEGSGLGRALIKERLNAGRGYRRNDTWLHTSELNDGYDWGRLNLQSVTEQSSLDDFLATAELAGTEFVAEKLNIKFVPAEARAGLLSSEESRRLKKLHEENKQLLRIPRRPPWDESTSPEVLQQTEKDSFLTWRRDLARLEEEQKLILTPFERNLDFWRQLWRVIERSDVVVQIVDARNPLLFRCPDLEKYVKEVSVHKVNMLLLNKADLLTREQRRAWARYFQKEGIRAVFWSALAEAQRLEAEERGEDAMDQEDQSDTEEETASKNATDHHEENSSSPNEEKDENEQDEEEEGEDERICVDESEWQTCSEESGDEDHAEENPESTATSSFYNSSRLLRKNELLEMFKSVHSGPTCKDGQITVGLVGYPNVGKSSTINTIFRNKKVSVSATPGHTKHFQTLFVEPGLCLCDCPGLVMPSFVSTKAEMICSGILPIDQMRDHVPAISLVCQNIPRNVLEGTYGINIIRPREDEDPDRPPTYEELLMAYGYMRGFMTAHGQPDQSRSARYVLKDYVSGKLLYCHPPPHINPEDFQPQHAKFAMRITGAEQIDGSGGKPSKVKRIENTVDKQFFHQANVRALTKGVQMVMGYKPGSGPVEAGKANTEQQAGKPWKKHGNRNKKEKVRRLNKHLDA.

Positions 165 to 426 constitute a CP-type G domain; sequence WRQLWRVIER…LCDCPGLVMP (262 aa). GTP is bound at residue 213–216; sequence NKAD. Positions 251-341 are disordered; it reads AEERGEDAMD…ESTATSSFYN (91 aa). 3 stretches are compositionally biased toward acidic residues: residues 253 to 270, 290 to 304, and 320 to 331; these read ERGE…TEEE, EKDE…EGED, and ESGDEDHAEENP. A compositionally biased stretch (polar residues) spans 332 to 341; the sequence is ESTATSSFYN. GTP contacts are provided by residues 375–382 and 419–422; these read GYPNVGKS and DCPG. Residues 602–640 are disordered; it reads GPVEAGKANTEQQAGKPWKKHGNRNKKEKVRRLNKHLDA. The segment covering 618–640 has biased composition (basic residues); it reads PWKKHGNRNKKEKVRRLNKHLDA.

This sequence belongs to the TRAFAC class YlqF/YawG GTPase family. LSG1 subfamily.

The protein localises to the cytoplasm. It is found in the endoplasmic reticulum. The protein resides in the nucleus. It localises to the cajal body. The enzyme catalyses GTP + H2O = GDP + phosphate + H(+). Functionally, functions as a GTPase. May act by mediating the release of NMD3 from the 60S ribosomal subunit after export into the cytoplasm during the 60S ribosomal subunit maturation. This Danio rerio (Zebrafish) protein is Large subunit GTPase 1 homolog.